The primary structure comprises 1643 residues: MAKVRAALERIRDPSVQTALSEAAYTHVRPVLKESLVNCPYALSNDEADCLESFGITVNPYANQTHTHAACKVIENRMLEIVGMHLPKHSCTMLFLKRSKLRYMRRAAILKDVFLNKDVEPKDLFRYDRDTIRSRLQDIDTKIAYMSDTLHFMSRREIVQLFEDSPKLETLLATVVLPVEALHKRTSLYPSLYSINYSAKGFEYIPGNHGGGSYFHPYTTLEWLKVRMINAEDFHKLSTGFILTFQLVESLGANHLFIVQKAKLLTPQMRTFCRDSLVTLPQVFCPAAMNANRPLSKTKAMQMLLYCKSVKQVTERDIYAKIRQIIPTSELELYDPDEIVHLANYFFFVSSLDSITCYEDLLSSDIWMRLTRPLRTAVRKFVELFKGKQDFDKLLIALKWQPFSYSLEPVDFTAYFVSRRVRTLAKMEDISWHQAAELARRLESEPDLLSWEDLCSKPIADPLASVSTPPLATLTSPAISESRVTDTSSPKLTNISVESILHPTSSNHATIAESLNPKFCGWTRGDFHHMIVNQPSDRLKGCRSWSYTTSPDVDLMLENLLLTPIPWESRLSDILLTLNTPANACCIQILDCSAASAWVDWSVQPIKTFPVAFVGMGETTLTFEDDSTLPLKEGEFVFFPPEWLARHKYQIKTASNLHLCATFLVLDTTLLGETLANNCIEPEPLRPTASRKSCQPTPSVDKSGADSPPEKQIVTPIVDAAVLSCRPKLQDVTKPTKVLMAAETSDSVADSLPWASWVNLLQKHGFKGNQQQIAQDGQLIIPISDIRKLPHIPFPEEVPETLRETLKNIKRFPVEITMQHKRAGSYDSDIKNNRTGKLLSQMDNKWKAAFAYKLQQEDRKVCGTIIHGCGGSGKSFAIQEWMRSLKEDQSVVTVVTPTVLLRNDWQTKLPILPADVFKTFEKSVIQPCNPILVFDDYTKLPPGLIESVVMHHQNVVFIILTGDNRQSVYHETNPEAYIAALPEAVEIFSPYCEFYLNATHRNVKDLANKLGVYSEREGKLKVNFASHHLKASRIPMLVPSTMKRNAMFDMGHHSMTYAGCQGLTAPKIQILLDNHTQFCSERVLYTCLSRAVDRIHFINTGPTTGDYWAKLESTPYLKAFIDTYRDEKTEVYNSQPASAEPTEPEAPATHFPTAPKPLLEPLVEKLTDKEAREIFSPAFGHSNAIQTEDSVVQLFQHQQAKDETLYWATIDTRLAISTPEANLREFNMKRDIGDILFMNYAKLMCLPPEPVPFEERLWKISADEVRNTYISKPIGNLVNAASRQSPDFPKNKIALFLKSQWVKKTEKLGTLKVKPGQTIASFMQETVMLYGTMARYLRKMRRRFQPDNIFINCETTPEDLDKFIKSQWDFSRPAHTNDFTAFDQSQDGAMLQFEVIKAKFFNIPAEIIEGYIYIKLNAAIFLGTLGIMRLSGEGPTFDANTECSIAYNATRFHITDDTAQVYAGDDMALDRVSIEKDSFNRLEKQLKLTSKPMFPKQVKGDYAEFCGWVMTPAGIIKHSLKMHASIQLQKKINNIKESARSYALDLRYAYKLGDELQEHLNEVEADYHQQSVRDMHLLHQQDVLNKGSASPPHVFEKTADANTAGSSKTHKRNALKKKKQTRIAEILPSPDATGLSSLPFRFF.

The 166-residue stretch at 59–224 folds into the Alphavirus-like MT domain; sequence NPYANQTHTH…FHPYTTLEWL (166 aa). A disordered region spans residues 686–711; the sequence is RPTASRKSCQPTPSVDKSGADSPPEK. The span at 690–700 shows a compositional bias: polar residues; the sequence is SRKSCQPTPSV. The 169-residue stretch at 828–996 folds into the (+)RNA virus helicase ATP-binding domain; that stretch reads SDIKNNRTGK…IFSPYCEFYL (169 aa). 868-875 is an ATP binding site; that stretch reads GCGGSGKS. One can recognise a (+)RNA virus helicase C-terminal domain in the interval 997–1132; that stretch reads NATHRNVKDL…TYRDEKTEVY (136 aa). The disordered stretch occupies residues 1131 to 1155; the sequence is VYNSQPASAEPTEPEAPATHFPTAP. A compositionally biased stretch (low complexity) spans 1136-1155; the sequence is PASAEPTEPEAPATHFPTAP. Positions 1372–1479 constitute a RdRp catalytic domain; that stretch reads RPAHTNDFTA…DRVSIEKDSF (108 aa). The interval 1587–1620 is disordered; sequence GSASPPHVFEKTADANTAGSSKTHKRNALKKKKQ. The segment covering 1608–1620 has biased composition (basic residues); it reads KTHKRNALKKKKQ.

This sequence belongs to the potexvirus/carlavirus RNA replication protein family.

The enzyme catalyses RNA(n) + a ribonucleoside 5'-triphosphate = RNA(n+1) + diphosphate. It carries out the reaction ATP + H2O = ADP + phosphate + H(+). Functionally, RNA replication. The central part of this protein possibly functions as an ATP-binding helicase. The polypeptide is RNA replication protein (Narcissus pseudonarcissus (Daffodil)).